Here is a 239-residue protein sequence, read N- to C-terminus: RNA polymerase sigma-E factor (239 aa).

A propeptide spans 1–29 (MKKLKLRLTHLWYKLLMKLGLKSDEVYYI) (removed by SpoIIGA). The short motif at 86-99 (DLISIGTIGLIKAV) is the Polymerase core binding element. A DNA-binding region (H-T-H motif) is located at residues 206–225 (QKDVADMMGISQSYISRLEK).

This sequence belongs to the sigma-70 factor family. Proteolytically cleaved in the N-terminus by SpoIIGA to yield the active peptide.

Functionally, sigma factors are initiation factors that promote the attachment of RNA polymerase to specific initiation sites and are then released. This sigma factor is responsible for the expression of sporulation specific genes. The sequence is that of RNA polymerase sigma-E factor (sigE) from Bacillus subtilis (strain 168).